We begin with the raw amino-acid sequence, 401 residues long: Cartilage-associated protein (401 aa).

The first 26 residues, 1–26 (MEPGRRGAAALLALLCVACALRAGRA), serve as a signal peptide directing secretion. Residues Asn-87 and Asn-363 are each glycosylated (N-linked (GlcNAc...) asparagine).

Belongs to the leprecan family. Found in articular chondrocytes. Expressed in a variety of tissues.

The protein resides in the secreted. It is found in the extracellular space. Its subcellular location is the extracellular matrix. Functionally, necessary for efficient 3-hydroxylation of fibrillar collagen prolyl residues. The sequence is that of Cartilage-associated protein (CRTAP) from Homo sapiens (Human).